The chain runs to 841 residues: Translation initiation factor IF-2 (841 aa).

Composition is skewed to basic and acidic residues over residues 1-12 (MSDNEIKNEAPK), 50-92 (EAAL…EATK), 114-170 (EQPK…REEA), 188-202 (READ…EANR), and 213-235 (KKGD…DVKG). Disordered regions lie at residues 1 to 24 (MSDN…KTTV) and 50 to 246 (EAAL…GSAL). Residues 340–510 (TRAPVVTIMG…LLQSEVLELT (171 aa)) form the tr-type G domain. A G1 region spans residues 349–356 (GHVDHGKT). 349 to 356 (GHVDHGKT) contributes to the GTP binding site. A G2 region spans residues 374–378 (GITQH). The G3 stretch occupies residues 396–399 (DTPG). Residues 396–400 (DTPGH) and 450–453 (NKID) contribute to the GTP site. Residues 450 to 453 (NKID) form a G4 region. The interval 486-488 (SAK) is G5.

The protein belongs to the TRAFAC class translation factor GTPase superfamily. Classic translation factor GTPase family. IF-2 subfamily.

Its subcellular location is the cytoplasm. Functionally, one of the essential components for the initiation of protein synthesis. Protects formylmethionyl-tRNA from spontaneous hydrolysis and promotes its binding to the 30S ribosomal subunits. Also involved in the hydrolysis of GTP during the formation of the 70S ribosomal complex. This Actinobacillus pleuropneumoniae serotype 3 (strain JL03) protein is Translation initiation factor IF-2.